Consider the following 309-residue polypeptide: Taste receptor type 2 member 43 (309 aa).

Met1 is a topological domain (extracellular). Residues 2-22 traverse the membrane as a helical segment; sequence ITFLPIIFSSLVVVTFVIGNF. Over 23–46 the chain is Cytoplasmic; sequence ANGFIALVNSIEWFKRQKISFADQ. A helical membrane pass occupies residues 47–67; sequence ILTALAVSRVGLLWVLLLNWY. Residues 68-86 are Extracellular-facing; the sequence is STVLNPAFNSVEVRTTAYN. A helical membrane pass occupies residues 87 to 107; that stretch reads IWAVINHFSNWLATTLSIFYL. The Cytoplasmic portion of the chain corresponds to 108–126; the sequence is LKIANFSNFIFLHLKRRVK. The chain crosses the membrane as a helical span at residues 127-147; it reads SVILVMLLGPLLFLACHLFVI. Residues 148 to 178 are Extracellular-facing; sequence NMNEIVRTKEFEGNMTWKIKLKSAMYFSNMT. Residues Asn161 and Asn176 are each glycosylated (N-linked (GlcNAc...) asparagine). The chain crosses the membrane as a helical span at residues 179–199; the sequence is VTMVANLVPFTLTLLSFMLLI. Residues 200–229 lie on the Cytoplasmic side of the membrane; sequence CSLCKHLKKMQLHGKGSQDPSTKVHIKALQ. A helical transmembrane segment spans residues 230–250; that stretch reads TVISFLLLCAIYFLSIMISVW. Residues 251-259 are Extracellular-facing; it reads SFGSLENKP. A helical transmembrane segment spans residues 260-280; that stretch reads VFMFCKAIRFSYPSIHPFILI. The Cytoplasmic segment spans residues 281-309; sequence WGNKKLKQTFLSVFWQMRYWVKGEKTSSP.

It belongs to the G-protein coupled receptor T2R family. As to expression, expressed in subsets of taste receptor cells of the tongue and exclusively in gustducin-positive cells. Expressed in airway epithelia.

It localises to the membrane. Its subcellular location is the cell projection. The protein resides in the cilium membrane. Functionally, gustducin-coupled receptor immplicated in the perception of bitter compounds in the oral cavity and the gastrointestinal tract. Signals through PLCB2 and the calcium-regulated cation channel TRPM5. Activated by the sulfonyl amide sweeteners saccharin and acesulfame K. In airway epithelial cells, binding of bitter compounds increases the intracellular calcium ion concentration and stimulates ciliary beat frequency. May act as chemosensory receptors in airway epithelial cells to detect and eliminate potential noxious agents from the airways. In Homo sapiens (Human), this protein is Taste receptor type 2 member 43 (TAS2R43).